Reading from the N-terminus, the 277-residue chain is Orotidine 5'-phosphate decarboxylase (277 aa).

The active-site Proton donor is the lysine 95.

Belongs to the OMP decarboxylase family. Type 2 subfamily.

The catalysed reaction is orotidine 5'-phosphate + H(+) = UMP + CO2. It functions in the pathway pyrimidine metabolism; UMP biosynthesis via de novo pathway; UMP from orotate: step 2/2. The sequence is that of Orotidine 5'-phosphate decarboxylase from Mycolicibacterium vanbaalenii (strain DSM 7251 / JCM 13017 / BCRC 16820 / KCTC 9966 / NRRL B-24157 / PYR-1) (Mycobacterium vanbaalenii).